The chain runs to 72 residues: Translation initiation factor IF-1 (72 aa).

In terms of domain architecture, S1-like spans 1–72 (MSKEEVLEFS…TKGRIIYRYK (72 aa)).

Belongs to the IF-1 family. In terms of assembly, component of the 30S ribosomal translation pre-initiation complex which assembles on the 30S ribosome in the order IF-2 and IF-3, IF-1 and N-formylmethionyl-tRNA(fMet); mRNA recruitment can occur at any time during PIC assembly.

It localises to the cytoplasm. Functionally, one of the essential components for the initiation of protein synthesis. Stabilizes the binding of IF-2 and IF-3 on the 30S subunit to which N-formylmethionyl-tRNA(fMet) subsequently binds. Helps modulate mRNA selection, yielding the 30S pre-initiation complex (PIC). Upon addition of the 50S ribosomal subunit IF-1, IF-2 and IF-3 are released leaving the mature 70S translation initiation complex. This is Translation initiation factor IF-1 from Bartonella henselae (strain ATCC 49882 / DSM 28221 / CCUG 30454 / Houston 1) (Rochalimaea henselae).